A 960-amino-acid polypeptide reads, in one-letter code: Probable RNA-binding protein 19 (960 aa).

The RRM 1 domain maps to 2-79 (SRLIVKNLPN…SRITVEFCKS (78 aa)). Disordered regions lie at residues 85-119 (KPRA…KKKK) and 149-294 (WAND…TTCH). 3 positions are modified to phosphoserine: serine 174, serine 176, and serine 180. Acidic residues predominate over residues 176-194 (SGQESEEEGAGEDLEEEAS). The segment covering 273-286 (RPPEARAETEKPAN) has biased composition (basic and acidic residues). RRM domains follow at residues 294–369 (HTVK…REKN) and 402–480 (GRLF…PSTI). A Glycyl lysine isopeptide (Lys-Gly) (interchain with G-Cter in SUMO2) cross-link involves residue lysine 481. The tract at residues 491 to 513 (LGSSSYKKKKEAQDKANSASSHN) is disordered. The RRM 4 domain maps to 587–659 (TVILVKNLPA…VPLYLEWAPV (73 aa)). Residues 667–729 (PQKKKLQDTP…EEEEEESLPG (63 aa)) are disordered. 2 stretches are compositionally biased toward acidic residues: residues 689–706 (TVPD…EEGA) and 714–726 (EEEE…EEES). RRM domains lie at 730 to 811 (CTLF…ISER) and 832 to 912 (SKIL…WADS). Phosphoserine is present on residues serine 936, serine 949, and serine 951.

This sequence belongs to the RRM MRD1 family. In terms of tissue distribution, expressed in the crypts of Lieberkuhn of the intestine and in intestinal neoplasia (at protein level).

The protein localises to the nucleus. It is found in the nucleolus. The protein resides in the nucleoplasm. It localises to the cytoplasm. Its subcellular location is the chromosome. Functionally, plays a role in embryo pre-implantation development. The polypeptide is Probable RNA-binding protein 19 (RBM19) (Homo sapiens (Human)).